The primary structure comprises 584 residues: Long-chain-fatty-acid--AMP ligase FadD26 (584 aa).

Belongs to the ATP-dependent AMP-binding enzyme family.

It carries out the reaction holo-[(phenol)carboxyphthiodiolenone synthase] + a long-chain fatty acid + ATP = a long-chain fatty acyl-[(phenol)carboxyphthiodiolenone synthase] + AMP + diphosphate. It catalyses the reaction eicosanoate + holo-[(phenol)carboxyphthiodiolenone synthase] + ATP = icosanoyl-[(phenol)carboxyphthiodiolenone synthase] + AMP + diphosphate. The enzyme catalyses holo-[(phenol)carboxyphthiodiolenone synthase] + docosanoate + ATP = docosanoyl-[(phenol)carboxyphthiodiolenone synthase] + AMP + diphosphate. The protein operates within lipid metabolism; fatty acid biosynthesis. Catalyzes the activation of long-chain fatty acids as acyl-adenylates (acyl-AMP), which are then transferred to the multifunctional polyketide synthase PpsA for further chain extension. Catalyzes the adenylation of the long-chain fatty acids eicosanoate (C20) or docosanoate (C22), and potentially the very-long-chain fatty acid lignocerate (C24). Involved in the biosynthesis of phthiocerol dimycocerosate (DIM A) and phthiodiolone dimycocerosate (DIM B). The sequence is that of Long-chain-fatty-acid--AMP ligase FadD26 from Mycobacterium marinum (strain ATCC BAA-535 / M).